A 249-amino-acid polypeptide reads, in one-letter code: 2,3-bisphosphoglycerate-dependent phosphoglycerate mutase (249 aa).

Residues 9–16, 22–23, R61, 88–91, K99, 115–116, and 184–185 each bind substrate; these read RHGQSQWN, TG, ERHY, RR, and GN. H10 (tele-phosphohistidine intermediate) is an active-site residue. E88 serves as the catalytic Proton donor/acceptor.

This sequence belongs to the phosphoglycerate mutase family. BPG-dependent PGAM subfamily. Homodimer.

It catalyses the reaction (2R)-2-phosphoglycerate = (2R)-3-phosphoglycerate. Its pathway is carbohydrate degradation; glycolysis; pyruvate from D-glyceraldehyde 3-phosphate: step 3/5. Functionally, catalyzes the interconversion of 2-phosphoglycerate and 3-phosphoglycerate. The polypeptide is 2,3-bisphosphoglycerate-dependent phosphoglycerate mutase (Xanthomonas oryzae pv. oryzae (strain PXO99A)).